The following is a 277-amino-acid chain: S-formylglutathione hydrolase FrmB (277 aa).

Residues serine 145, aspartate 221, and histidine 254 each act as charge relay system in the active site.

This sequence belongs to the esterase D family.

The catalysed reaction is S-formylglutathione + H2O = formate + glutathione + H(+). In terms of biological role, serine hydrolase involved in the detoxification of formaldehyde. Hydrolyzes S-formylglutathione to glutathione and formate. The protein is S-formylglutathione hydrolase FrmB (frmB) of Escherichia coli O1:K1 / APEC.